The chain runs to 664 residues: DNA ligase (664 aa).

Residues 32–36 (DKEYD) and 80–81 (SL) contribute to the NAD(+) site. Lysine 122 serves as the catalytic N6-AMP-lysine intermediate. Residues arginine 144, glutamate 178, and lysine 314 each coordinate NAD(+). Residues cysteine 407, cysteine 410, cysteine 423, and cysteine 429 each contribute to the Zn(2+) site. The BRCT domain maps to 587–664 (IDENPFMDKT…NEEEFSNKIK (78 aa)).

This sequence belongs to the NAD-dependent DNA ligase family. LigA subfamily. Mg(2+) is required as a cofactor. It depends on Mn(2+) as a cofactor.

It catalyses the reaction NAD(+) + (deoxyribonucleotide)n-3'-hydroxyl + 5'-phospho-(deoxyribonucleotide)m = (deoxyribonucleotide)n+m + AMP + beta-nicotinamide D-nucleotide.. Its function is as follows. DNA ligase that catalyzes the formation of phosphodiester linkages between 5'-phosphoryl and 3'-hydroxyl groups in double-stranded DNA using NAD as a coenzyme and as the energy source for the reaction. It is essential for DNA replication and repair of damaged DNA. This is DNA ligase from Clostridium botulinum (strain Okra / Type B1).